The chain runs to 178 residues: Large ribosomal subunit protein uL6 (178 aa).

The protein belongs to the universal ribosomal protein uL6 family. As to quaternary structure, part of the 50S ribosomal subunit.

This protein binds to the 23S rRNA, and is important in its secondary structure. It is located near the subunit interface in the base of the L7/L12 stalk, and near the tRNA binding site of the peptidyltransferase center. In Natranaerobius thermophilus (strain ATCC BAA-1301 / DSM 18059 / JW/NM-WN-LF), this protein is Large ribosomal subunit protein uL6.